Reading from the N-terminus, the 299-residue chain is UDP-N-acetylenolpyruvoylglucosamine reductase (299 aa).

The region spanning 31-192 is the FAD-binding PCMH-type domain; that stretch reads VGGVAEVVFK…VDATFVGACG (162 aa). R172 is a catalytic residue. The active-site Proton donor is the S221. E291 is an active-site residue.

The protein belongs to the MurB family. The cofactor is FAD.

The protein localises to the cytoplasm. It catalyses the reaction UDP-N-acetyl-alpha-D-muramate + NADP(+) = UDP-N-acetyl-3-O-(1-carboxyvinyl)-alpha-D-glucosamine + NADPH + H(+). It participates in cell wall biogenesis; peptidoglycan biosynthesis. Cell wall formation. This Anaplasma marginale (strain St. Maries) protein is UDP-N-acetylenolpyruvoylglucosamine reductase.